We begin with the raw amino-acid sequence, 162 residues long: Tripartite terminase subunit 2 (162 aa).

Positions 1-58 (MYGRSNAPGCQPPVRAHPPSSPMTSRLQLAAMEQNASDAALSGMQQARSRQASPKRLR) are disordered. The segment covering 43–52 (GMQQARSRQA) has biased composition (polar residues).

It belongs to the herpesviridae TRM2 protein family. Associates with TRM1 and TRM3 to form the tripartite terminase complex.

Its subcellular location is the host nucleus. Its function is as follows. Component of the molecular motor that translocates viral genomic DNA in empty capsid during DNA packaging. Forms a tripartite terminase complex together with TRM1 and TRM3 in the host cytoplasm. Once the complex reaches the host nucleus, it interacts with the capsid portal vertex. This portal forms a ring in which genomic DNA is translocated into the capsid. This is Tripartite terminase subunit 2 from Equine herpesvirus 1 (strain Ab4p) (EHV-1).